We begin with the raw amino-acid sequence, 436 residues long: Prenyltransferase nscD (436 aa).

It belongs to the tryptophan dimethylallyltransferase family.

Its pathway is secondary metabolite biosynthesis. Functionally, prenyltransferase; part of the gene cluster that mediates the biosynthesis of neosartoricin B, a prenylated anthracenone that probably exhibits T-cell antiproliferative activity, suggestive of a physiological role as an immunosuppressive agent. The non-reducing polyketide synthase nscA probably synthesizes and cyclizes the decaketide backbone. The hydrolase nscB then mediates the product release through hydrolysis followed by spontaneous decarboxylation. The prenyltransferase nscD catalyzes the addition of the dimethylallyl group to the aromatic C5. The FAD-dependent monooxygenase nscC is then responsible for the stereospecific hydroxylation at C2. Neosartoricin B can be converted into two additional compounds neosartoricins C and D. Neosartoricin C is a spirocyclic compound that is cyclized through the attack of C3 hydroxyl on C14, followed by dehydration. On the other hand, neosartoricin D is a further cyclized compound in which attack of C2 on C14 in neosartoricin C results in the formation of the acetal-containing dioxabicyclo-octanone ring. Both of these compounds are novel and possibly represent related metabolites of the gene cluster. This chain is Prenyltransferase nscD, found in Trichophyton equinum (strain ATCC MYA-4606 / CBS 127.97) (Horse ringworm fungus).